Here is a 427-residue protein sequence, read N- to C-terminus: MVWLRAPDRVVVHPSTVEGRVEAPPSKSYTHRMLFLALLARGRSVVRRPLVSNDTLATLNAVALLGGKPRLGRGVAEVEGGEVRGGAVVYAAGSGTTIRIAMGVAAHSAEATLLYGDESLNRRPVHPLSEALRSMGARVCDTGGNPPVKVSGPLRRASVEVDAAISSQFATSLLIAGSRLGEFELSAARLSSRGYVDITLESLSMFGVRVEREGYRLFRLRGTPKPVDAAVPGDYSSASFMLAAGAIAGRVEVEGLRPVDPQPDRRIVELLRSMGARVRVEGGVVAVESTGPLEPVDVDLDGSPDLAPVAAVLAAYARGVSRLRGLERLKYKESDRLSAIAWNLARLGVEARVRGGILEIRGGGVEGGVARSWGDHRIAMAMAVAGLGARRPVAVEGFSRVPDSYPGFLEDLARLGARVEAVKGGGV.

Lys-27, Ser-28, and Arg-32 together coordinate 3-phosphoshikimate. Lys-27 is a binding site for phosphoenolpyruvate. Positions 95 and 123 each coordinate phosphoenolpyruvate. 3-phosphoshikimate is bound by residues Ser-166, Ser-167, Gln-168, Ser-192, Asp-305, and Lys-332. A phosphoenolpyruvate-binding site is contributed by Gln-168. Asp-305 functions as the Proton acceptor in the catalytic mechanism. 2 residues coordinate phosphoenolpyruvate: Arg-336 and Arg-377.

This sequence belongs to the EPSP synthase family. In terms of assembly, monomer.

The protein resides in the cytoplasm. The catalysed reaction is 3-phosphoshikimate + phosphoenolpyruvate = 5-O-(1-carboxyvinyl)-3-phosphoshikimate + phosphate. It participates in metabolic intermediate biosynthesis; chorismate biosynthesis. Functionally, catalyzes the transfer of the enolpyruvyl moiety of phosphoenolpyruvate (PEP) to the 5-hydroxyl of shikimate-3-phosphate (S3P) to produce enolpyruvyl shikimate-3-phosphate and inorganic phosphate. The protein is 3-phosphoshikimate 1-carboxyvinyltransferase of Aeropyrum pernix (strain ATCC 700893 / DSM 11879 / JCM 9820 / NBRC 100138 / K1).